The sequence spans 273 residues: Urease accessory protein UreD (273 aa).

This sequence belongs to the UreD family. As to quaternary structure, ureD, UreF and UreG form a complex that acts as a GTP-hydrolysis-dependent molecular chaperone, activating the urease apoprotein by helping to assemble the nickel containing metallocenter of UreC. The UreE protein probably delivers the nickel.

It localises to the cytoplasm. In terms of biological role, required for maturation of urease via the functional incorporation of the urease nickel metallocenter. In Rhizobium rhizogenes (strain K84 / ATCC BAA-868) (Agrobacterium radiobacter), this protein is Urease accessory protein UreD.